The chain runs to 498 residues: ATP synthase subunit beta, chloroplastic (498 aa).

Residue threonine 6 is modified to Phosphothreonine. Position 13 is a phosphoserine (serine 13). Residue 172 to 179 (GGAGVGKT) coordinates ATP.

It belongs to the ATPase alpha/beta chains family. In terms of assembly, F-type ATPases have 2 components, CF(1) - the catalytic core - and CF(0) - the membrane proton channel. CF(1) has five subunits: alpha(3), beta(3), gamma(1), delta(1), epsilon(1). CF(0) has four main subunits: a(1), b(1), b'(1) and c(9-12).

The protein localises to the plastid. The protein resides in the chloroplast thylakoid membrane. The enzyme catalyses ATP + H2O + 4 H(+)(in) = ADP + phosphate + 5 H(+)(out). Produces ATP from ADP in the presence of a proton gradient across the membrane. The catalytic sites are hosted primarily by the beta subunits. The protein is ATP synthase subunit beta, chloroplastic of Arabis hirsuta (Hairy rock-cress).